The chain runs to 172 residues: Peptide deformylase (172 aa).

Residues Cys94 and His136 each coordinate Fe cation. Residue Glu137 is part of the active site. A Fe cation-binding site is contributed by His140.

This sequence belongs to the polypeptide deformylase family. Fe(2+) is required as a cofactor.

The catalysed reaction is N-terminal N-formyl-L-methionyl-[peptide] + H2O = N-terminal L-methionyl-[peptide] + formate. Functionally, removes the formyl group from the N-terminal Met of newly synthesized proteins. Requires at least a dipeptide for an efficient rate of reaction. N-terminal L-methionine is a prerequisite for activity but the enzyme has broad specificity at other positions. This is Peptide deformylase from Pelagibacter ubique (strain HTCC1062).